A 248-amino-acid chain; its full sequence is 1-(5-phosphoribosyl)-5-[(5-phosphoribosylamino)methylideneamino] imidazole-4-carboxamide isomerase (248 aa).

The Proton acceptor role is filled by D8. D131 functions as the Proton donor in the catalytic mechanism.

The protein belongs to the HisA/HisF family.

Its subcellular location is the cytoplasm. The catalysed reaction is 1-(5-phospho-beta-D-ribosyl)-5-[(5-phospho-beta-D-ribosylamino)methylideneamino]imidazole-4-carboxamide = 5-[(5-phospho-1-deoxy-D-ribulos-1-ylimino)methylamino]-1-(5-phospho-beta-D-ribosyl)imidazole-4-carboxamide. Its pathway is amino-acid biosynthesis; L-histidine biosynthesis; L-histidine from 5-phospho-alpha-D-ribose 1-diphosphate: step 4/9. The sequence is that of 1-(5-phosphoribosyl)-5-[(5-phosphoribosylamino)methylideneamino] imidazole-4-carboxamide isomerase from Cupriavidus taiwanensis (strain DSM 17343 / BCRC 17206 / CCUG 44338 / CIP 107171 / LMG 19424 / R1) (Ralstonia taiwanensis (strain LMG 19424)).